Consider the following 278-residue polypeptide: Dehydrogenase/reductase SDR family member 4 (278 aa).

Residue 36-60 (LVTASTDGIGFAIARRLAQDGAHVV) coordinates NADP(+). K92 carries the post-translational modification N6-acetyllysine; alternate. An N6-succinyllysine; alternate modification is found at K92. The residue at position 105 (K105) is an N6-acetyllysine. Phosphoserine is present on I140. Residue S169 coordinates substrate. Y182 serves as the catalytic Proton acceptor. Position 186 (K186) interacts with NADP(+). An N6-acetyllysine; alternate modification is found at K216. K216 carries the N6-succinyllysine; alternate modification. S220 is modified (phosphoserine). An N6-succinyllysine mark is found at K227 and K234. Positions 276–278 (SRL) match the Peroxisomal targeting signal motif.

This sequence belongs to the short-chain dehydrogenases/reductases (SDR) family. Homotetramer. In terms of tissue distribution, predominantly expressed in normal cervix (at protein level). Expressed in some neoplastic cervical tissues, but not in normal cervix (at protein level). As to expression, expressed in a few neoplastic cervical tissues. In terms of tissue distribution, high expression in liver.

The protein localises to the peroxisome. Its subcellular location is the nucleus. The catalysed reaction is a secondary alcohol + NADP(+) = a ketone + NADPH + H(+). It carries out the reaction 3beta-hydroxy-5beta-pregnane-20-one + NADP(+) = 5beta-pregnan-3,20-dione + NADPH + H(+). The enzyme catalyses 5beta-dihydrotestosterone + NADPH + H(+) = 5beta-androstane-3beta,17beta-diol + NADP(+). It catalyses the reaction 5beta-androstane-3,17-dione + NADPH + H(+) = 3beta-hydroxy-5beta-androstane-17-one + NADP(+). The catalysed reaction is isatin + NADPH + H(+) = 3-hydroxyindolin-2-one + NADP(+). It carries out the reaction lithocholate + NADP(+) = 3-oxo-5beta-cholan-24-oate + NADPH + H(+). The enzyme catalyses 3-oxo-5beta-cholan-24-oate + NADPH + H(+) = isolithocholate + NADP(+). Its activity is regulated as follows. Inhibited by flavonoids (quercetin and genistein), cetylpyridium chloride, phenylhexane and valproic acid. Low inhibition is observed with fatty acids (myristic acid and lauric acid). No significant inhibition is observed with barbital, dicumarol, indomethacin, metyrapone, ethacrynic acid, disulfiram, hexestrol and benzodiazepines (diazepam and nitrazepam). NADPH-dependent oxidoreductase which catalyzes the reduction of a variety of compounds bearing carbonyl groups including ketosteroids, alpha-dicarbonyl compounds, aldehydes, aromatic ketones and quinones. Reduces 3-ketosteroids and benzil into 3beta-hydroxysteroids and R-benzoin, respectively, in contrast to the stereoselectivity of non-primate DHRS4s which produce 3alpha-hydroxysteroids and S-benzoin. Diplays low activity toward all-trans-retinal and no activity toward 9-cis-retinal as compared to non-primate mammals. In the reverse reaction, catalyze the NAD-dependent oxidation of 3beta-hydroxysteroids and alcohol, but with much lower efficiency. Involved in the metabolism of 3beta-hydroxysteroids, isatin and xenobiotic carbonyl compounds. In terms of biological role, no detected catalytic activity in vitro, possibly due to the lack of catalytic site. Its function is as follows. NADPH-dependent oxidoreductase which catalyzes the reduction of a variety of compounds bearing carbonyl groups including ketosteroids, alpha-dicarbonyl compounds, aldehydes, aromatic ketones and quinones. Involved in the metabolism of 3beta-hydroxysteroids, isatin and xenobiotic carbonyl compounds. Has a higher catalytic activity for xenobiotic alpha-dicarbonyl compounds, sucha as benzil, than isoform 1 and is involved in benzil detoxification. The chain is Dehydrogenase/reductase SDR family member 4 from Homo sapiens (Human).